The sequence spans 418 residues: UDP-N-acetylglucosamine 1-carboxyvinyltransferase (418 aa).

22 to 23 (KN) provides a ligand contact to phosphoenolpyruvate. R92 is a binding site for UDP-N-acetyl-alpha-D-glucosamine. C116 (proton donor) is an active-site residue. C116 bears the 2-(S-cysteinyl)pyruvic acid O-phosphothioketal mark. UDP-N-acetyl-alpha-D-glucosamine contacts are provided by D306 and I328.

This sequence belongs to the EPSP synthase family. MurA subfamily.

It is found in the cytoplasm. The enzyme catalyses phosphoenolpyruvate + UDP-N-acetyl-alpha-D-glucosamine = UDP-N-acetyl-3-O-(1-carboxyvinyl)-alpha-D-glucosamine + phosphate. It functions in the pathway cell wall biogenesis; peptidoglycan biosynthesis. In terms of biological role, cell wall formation. Adds enolpyruvyl to UDP-N-acetylglucosamine. This is UDP-N-acetylglucosamine 1-carboxyvinyltransferase from Shewanella amazonensis (strain ATCC BAA-1098 / SB2B).